The primary structure comprises 134 residues: MLKEFKEFALRGNLIDLAIGFIIGAAFSGLVQSVVNDIIMPIVGRITGGVDFSNLYWQLSGAPQPTLALARQAGATIAYGNFITLLINFLIVAFVLFLAVKALNKVTPKPDPASTQPPKQEVLLEQIRDLLARK.

A run of 2 helical transmembrane segments spans residues 15–35 and 80–100; these read IDLA…QSVV and GNFI…FLAV.

Belongs to the MscL family. As to quaternary structure, homopentamer.

It is found in the cell inner membrane. Its function is as follows. Channel that opens in response to stretch forces in the membrane lipid bilayer. May participate in the regulation of osmotic pressure changes within the cell. This chain is Large-conductance mechanosensitive channel, found in Methylocella silvestris (strain DSM 15510 / CIP 108128 / LMG 27833 / NCIMB 13906 / BL2).